The chain runs to 147 residues: Putative acetyltransferase BSU40680 (147 aa).

Residues methionine 1–aspartate 144 enclose the N-acetyltransferase domain. Residues isoleucine 74–isoleucine 76 and glycine 115–tyrosine 117 each bind CoA.

It belongs to the UPF0039 (ElaA) family.

In terms of biological role, could catalyze the transfer of an acetyl group from acetyl coenzyme A (AcCoA) to an acceptor substrate and release both CoA and the acetylated product. This chain is Putative acetyltransferase BSU40680 (yybD), found in Bacillus subtilis (strain 168).